Reading from the N-terminus, the 214-residue chain is MAAPSVPTPLYGHVGRGAFRDVYEPAEDTFLLLDALEAAAAELAGVEICLEVGAGSGVVSAFLASMIGPRALYMCTDINPEAAACTLETARCNRVHVQPVITDLVHGLLPRLKGKVDLLVFNPPYVVTPPEEVGSRGIEAAWAGGRNGREVMDRFFPLAPELLSPRGLFYLVTVKENNPEEIFKTMKTRGLQGTTALCRQAGQEALSVLRFSKS.

The S-adenosyl-L-methionine site is built by Thr29, Glu51, Gly53, Asp77, Asp103, Leu104, and Asn122. Asn122 is a binding site for a protein.

It belongs to the eukaryotic/archaeal PrmC-related family. In terms of assembly, heterodimer; heterodimerization with TRMT112 is required for S-adenosyl-L-methionine-binding. In terms of processing, ubiquitinated, leading to its degradation by the proteasome. In terms of tissue distribution, highly expressed in undifferentiated embryonic stem cells (at protein level). Also expressed in testis and brain, weakly expressed in differentiated embryonic stem cells and kidney. Not expressed in muscle, heart, placenta, pancreas, lung and stomach.

The protein localises to the nucleus. It carries out the reaction L-lysyl-[histone] + S-adenosyl-L-methionine = N(6)-methyl-L-lysyl-[histone] + S-adenosyl-L-homocysteine + H(+). It catalyses the reaction L-glutaminyl-[protein] + S-adenosyl-L-methionine = N(5)-methyl-L-glutaminyl-[protein] + S-adenosyl-L-homocysteine + H(+). The catalysed reaction is methylarsonous acid + S-adenosyl-L-methionine = dimethylarsinate + S-adenosyl-L-homocysteine + 2 H(+). Functionally, methyltransferase that can methylate proteins and, to a lower extent, arsenic. Catalytic subunit of a heterodimer with TRMT112, which monomethylates 'Lys-12' of histone H4 (H4K12me1), a modification present at the promoters of numerous genes encoding cell cycle regulators. Catalytic subunit of a heterodimer with TRMT112, which catalyzes N5-methylation of Glu residue of proteins with a Gly-Gln-Xaa-Xaa-Xaa-Arg motif. Methylates ETF1 on 'Gln-185'; ETF1 needs to be complexed to ERF3 in its GTP-bound form to be efficiently methylated. May also play a role in the modulation of arsenic-induced toxicity by mediating the conversion of monomethylarsonous acid (3+) into the less toxic dimethylarsonic acid. It however only plays a limited role in arsenic metabolism compared with AS3MT. The chain is Methyltransferase HEMK2 from Mus musculus (Mouse).